The following is a 285-amino-acid chain: Acetyl-coenzyme A carboxylase carboxyl transferase subunit beta (285 aa).

Positions Ile29–Lys285 constitute a CoA carboxyltransferase N-terminal domain. Residues Cys33, Cys36, Cys52, and Cys55 each coordinate Zn(2+). Residues Cys33–Cys55 form a C4-type zinc finger.

This sequence belongs to the AccD/PCCB family. Acetyl-CoA carboxylase is a heterohexamer composed of biotin carboxyl carrier protein (AccB), biotin carboxylase (AccC) and two subunits each of ACCase subunit alpha (AccA) and ACCase subunit beta (AccD). Zn(2+) is required as a cofactor.

Its subcellular location is the cytoplasm. The catalysed reaction is N(6)-carboxybiotinyl-L-lysyl-[protein] + acetyl-CoA = N(6)-biotinyl-L-lysyl-[protein] + malonyl-CoA. Its pathway is lipid metabolism; malonyl-CoA biosynthesis; malonyl-CoA from acetyl-CoA: step 1/1. Functionally, component of the acetyl coenzyme A carboxylase (ACC) complex. Biotin carboxylase (BC) catalyzes the carboxylation of biotin on its carrier protein (BCCP) and then the CO(2) group is transferred by the transcarboxylase to acetyl-CoA to form malonyl-CoA. The chain is Acetyl-coenzyme A carboxylase carboxyl transferase subunit beta from Staphylococcus aureus (strain MSSA476).